Here is a 672-residue protein sequence, read N- to C-terminus: Zinc finger protein 271 (672 aa).

The disordered stretch occupies residues 1–29 (MEIQFNYESQEHHLLSDGENKTKIGKPAS). Over residues 9–22 (SQEHHLLSDGENKT) the composition is skewed to basic and acidic residues. The C2H2-type 1; degenerate zinc finger occupies 80 to 102 (HNCDEYGQSFVWNTGLFRHRKTH). 19 C2H2-type zinc fingers span residues 107–129 (YECD…QRIH), 135–157 (YSCN…QRVH), 163–185 (YKCD…QRIH), 191–213 (YQCS…QRIH), 219–241 (YTCN…QRIH), 247–269 (YKCD…QRIH), 275–297 (YPCN…RRIH), 303–325 (YKCN…QRIH), 331–353 (YPCD…QRIH), 359–381 (YPCN…HRIH), 387–409 (YECD…QRIH), 415–437 (YPCS…QRIH), 443–465 (YACN…QRVH), 471–493 (YHCN…QRIH), 499–521 (YLCT…QRIH), 527–549 (YKCS…QRIH), 555–577 (NPCN…QKIH), 583–605 (YKCD…QKIH), and 611–633 (YRCV…EEVH).

Belongs to the krueppel C2H2-type zinc-finger protein family.

The protein resides in the nucleus. May be involved in transcriptional regulation. This is Zinc finger protein 271 (ZNF271) from Pongo abelii (Sumatran orangutan).